A 1073-amino-acid polypeptide reads, in one-letter code: Receptor-type guanylate cyclase gcy-23 (1073 aa).

An N-terminal signal peptide occupies residues 1 to 15; it reads MRRELFIFLLLLGEC. Topologically, residues 16-458 are extracellular; it reads ANVKVKVGHI…FRNEKCDYTT (443 aa). Asparagine 336 is a glycosylation site (N-linked (GlcNAc...) asparagine). A helical transmembrane segment spans residues 459-479; sequence LIIGGCIVLLIILLIICFFIL. Topologically, residues 480–1073 are cytoplasmic; that stretch reads SRVCENRALA…QQQNFSQLGI (594 aa). The Protein kinase domain maps to 508–808; the sequence is MKSMLSIGSS…RVRLNTENYL (301 aa). Residues 813-844 are a coiled coil; that stretch reads SLVDQMMRMMEQYANNLEKLVAERTGMLEEAN. Residues 878–1008 form the Guanylate cyclase domain; the sequence is TVMFSDIVGF…DTVNVASRME (131 aa). Mg(2+) is bound by residues aspartate 883, isoleucine 884, and aspartate 927.

The protein belongs to the adenylyl cyclase class-4/guanylyl cyclase family. Expressed specifically in AFD sensory neurons.

The protein resides in the cell membrane. The protein localises to the cell projection. Its subcellular location is the cilium. It catalyses the reaction GTP = 3',5'-cyclic GMP + diphosphate. Its function is as follows. Guanylate cyclase involved in the production of the second messenger cGMP. Regulates thermotaxis responses in AFD sensory neurons. May regulate AFD neuronal activity such as calcium responses to temperature gradients. In Caenorhabditis elegans, this protein is Receptor-type guanylate cyclase gcy-23.